The following is an 806-amino-acid chain: Leucine--tRNA ligase (806 aa).

The 'HIGH' region signature appears at 38-48 (PYPSGEIHMGH). Residues 572-576 (KMSKS) carry the 'KMSKS' region motif. Position 575 (K575) interacts with ATP.

It belongs to the class-I aminoacyl-tRNA synthetase family.

Its subcellular location is the cytoplasm. The catalysed reaction is tRNA(Leu) + L-leucine + ATP = L-leucyl-tRNA(Leu) + AMP + diphosphate. In Helicobacter pylori (strain ATCC 700392 / 26695) (Campylobacter pylori), this protein is Leucine--tRNA ligase.